A 361-amino-acid chain; its full sequence is MTSLYALIRPLLFRLDAERAHDLTAKALRVTSRAPLLPRLIRALYAWEDPLLAVDWSGLHFANPVGVAAGFDKRADLVDGLALLGFGHIEVGTVTPRPQPGNPRPRLFRLPEDTALINRLGFNSPGMVAVARALRARRSRDVIVGVNIGKNRDTPLERAVEDYVATFVALAPIADYVAVNISSPNTPGLRRLHERAALETLLHELTRLNRALPHPRPIALKVSPDETPDQLEAVVRAGCDAGIAAFIATNTTLARDDLHSRLAIETGGLSGRPLTQRARQVIGAIYRLTHGAPPVIGVGGIATAEDAYQHIRAGARLIQIYTGMVYAGPAIARDIKQGLARRLRRDGFTSLEEAVGVMVAA.

FMN is bound by residues 69 to 73 (AGFDK) and Thr93. Lys73 is a binding site for substrate. Substrate is bound at residue 118–122 (NRLGF). Positions 147 and 180 each coordinate FMN. Residue Asn180 participates in substrate binding. The Nucleophile role is filled by Ser183. A substrate-binding site is contributed by Asn185. 2 residues coordinate FMN: Lys221 and Thr249. 250–251 (NT) is a binding site for substrate. Residues Gly271, Gly300, and 321 to 322 (YT) contribute to the FMN site.

It belongs to the dihydroorotate dehydrogenase family. Type 2 subfamily. Monomer. The cofactor is FMN.

It localises to the cell membrane. The catalysed reaction is (S)-dihydroorotate + a quinone = orotate + a quinol. The protein operates within pyrimidine metabolism; UMP biosynthesis via de novo pathway; orotate from (S)-dihydroorotate (quinone route): step 1/1. Catalyzes the conversion of dihydroorotate to orotate with quinone as electron acceptor. In Roseiflexus sp. (strain RS-1), this protein is Dihydroorotate dehydrogenase (quinone).